A 476-amino-acid polypeptide reads, in one-letter code: Proline--tRNA ligase (476 aa).

Belongs to the class-II aminoacyl-tRNA synthetase family. ProS type 3 subfamily. Homodimer.

The protein localises to the cytoplasm. It carries out the reaction tRNA(Pro) + L-proline + ATP = L-prolyl-tRNA(Pro) + AMP + diphosphate. Catalyzes the attachment of proline to tRNA(Pro) in a two-step reaction: proline is first activated by ATP to form Pro-AMP and then transferred to the acceptor end of tRNA(Pro). The chain is Proline--tRNA ligase from Mycoplasma mobile (strain ATCC 43663 / 163K / NCTC 11711) (Mesomycoplasma mobile).